Here is a 230-residue protein sequence, read N- to C-terminus: Enolase-phosphatase E1 (230 aa).

This sequence belongs to the HAD-like hydrolase superfamily. MasA/MtnC family. As to quaternary structure, monomer. It depends on Mg(2+) as a cofactor.

It catalyses the reaction 5-methylsulfanyl-2,3-dioxopentyl phosphate + H2O = 1,2-dihydroxy-5-(methylsulfanyl)pent-1-en-3-one + phosphate. Its pathway is amino-acid biosynthesis; L-methionine biosynthesis via salvage pathway; L-methionine from S-methyl-5-thio-alpha-D-ribose 1-phosphate: step 3/6. It functions in the pathway amino-acid biosynthesis; L-methionine biosynthesis via salvage pathway; L-methionine from S-methyl-5-thio-alpha-D-ribose 1-phosphate: step 4/6. Bifunctional enzyme that catalyzes the enolization of 2,3-diketo-5-methylthiopentyl-1-phosphate (DK-MTP-1-P) into the intermediate 2-hydroxy-3-keto-5-methylthiopentenyl-1-phosphate (HK-MTPenyl-1-P), which is then dephosphorylated to form the acireductone 1,2-dihydroxy-3-keto-5-methylthiopentene (DHK-MTPene). This is Enolase-phosphatase E1 from Sulfurihydrogenibium sp. (strain YO3AOP1).